The following is a 121-amino-acid chain: Putative iron-sulfur cluster insertion protein ErpA (121 aa).

Residues Cys-49, Cys-113, and Cys-115 each contribute to the iron-sulfur cluster site.

Belongs to the HesB/IscA family. In terms of assembly, homodimer. It depends on iron-sulfur cluster as a cofactor.

In terms of biological role, required for insertion of 4Fe-4S clusters. The sequence is that of Putative iron-sulfur cluster insertion protein ErpA from Methylibium petroleiphilum (strain ATCC BAA-1232 / LMG 22953 / PM1).